A 347-amino-acid chain; its full sequence is MNPLIFTMILLTVMLGTAIVMTTSHWVMAWIGFEMNMLAIIPILMKKYNPRSMEASTKYFLTQATASMLLMLAIVINLTYSGQWSMTKPLNSTASIIMTLAMAMKLGLAPFHFWVPEVTQGVQLSSGLILLTWQKLAPMSILYQISPTINLDLLLLMSILSILVGGWGGLNQTQLRKILAYSSIAHMGWMTAIMVYNPTMALLNLAIYILLTTTTFVMLMVDSSTTTLSLSHMWNKMPLLTTAILTIMLSLGGLPPLSGFTPKWMIIQEMTKNDSMITPTIMAVMTLLNLYFYMRLTYSTSLTMFPSTNNMKVKWQFNNKKLTANLSPLIILSTLILPLSPMLALLE.

Transmembrane regions (helical) follow at residues 3-23, 25-45, 59-79, 96-116, 122-142, 149-169, 178-198, 201-221, 237-257, 274-294, and 326-346; these read PLIFTMILLTVMLGTAIVMTT, HWVMAWIGFEMNMLAIIPILM, YFLTQATASMLLMLAIVINLT, IIMTLAMAMKLGLAPFHFWVP, VQLSSGLILLTWQKLAPMSIL, INLDLLLLMSILSILVGGWGG, ILAYSSIAHMGWMTAIMVYNP, ALLNLAIYILLTTTTFVMLMV, MPLLTTAILTIMLSLGGLPPL, DSMITPTIMAVMTLLNLYFYM, and LSPLIILSTLILPLSPMLALL.

The protein belongs to the complex I subunit 2 family. As to quaternary structure, core subunit of respiratory chain NADH dehydrogenase (Complex I) which is composed of 45 different subunits. Interacts with TMEM242.

The protein localises to the mitochondrion inner membrane. The catalysed reaction is a ubiquinone + NADH + 5 H(+)(in) = a ubiquinol + NAD(+) + 4 H(+)(out). Core subunit of the mitochondrial membrane respiratory chain NADH dehydrogenase (Complex I) which catalyzes electron transfer from NADH through the respiratory chain, using ubiquinone as an electron acceptor. Essential for the catalytic activity and assembly of complex I. This is NADH-ubiquinone oxidoreductase chain 2 from Nyctimene aello (Broad-striped tube-nosed fruit bat).